The primary structure comprises 83 residues: Large ribosomal subunit protein bL27 (83 aa).

This sequence belongs to the bacterial ribosomal protein bL27 family.

The chain is Large ribosomal subunit protein bL27 from Bifidobacterium adolescentis (strain ATCC 15703 / DSM 20083 / NCTC 11814 / E194a).